A 38-amino-acid chain; its full sequence is Toxin Bcg III 31.16 (38 aa).

3 disulfide bridges follow: Cys4–Cys37, Cys6–Cys30, and Cys20–Cys38.

This sequence belongs to the sea anemone type 3 (BDS) potassium channel toxin family.

The protein resides in the secreted. It is found in the nematocyst. In terms of biological role, possible modulator of crustacean voltage-gated sodium channels (Nav). In Bunodosoma cangicum (Sea anemone), this protein is Toxin Bcg III 31.16.